The primary structure comprises 381 residues: Selenoprotein P (381 aa).

Residues 1–19 (MWRSLGLALALCLLPSGGT) form the signal peptide. N-linked (GlcNAc...) asparagine glycosylation is present at N46. Position 59 (U59) is a non-standard amino acid, selenocysteine. N-linked (GlcNAc...) (complex) asparagine glycosylation occurs at N83. N-linked (GlcNAc...) asparagine glycosylation is found at N119, N128, and N174. The disordered stretch occupies residues 200–268 (TPSPHYHHEH…ENRDMPASED (69 aa)). Basic residues predominate over residues 204 to 216 (HYHHEHHHNHGHQ). A compositionally biased stretch (polar residues) spans 218-230 (LGSSELSENQQPG). Over residues 243–255 (LHHHHKHKGQHRQ) the composition is skewed to basic residues. Position 266 is a phosphoserine (S266). Residues U300, U318, and U330 are each a non-standard amino acid (selenocysteine). N338 is a glycosylation site (N-linked (GlcNAc...) asparagine). Residues U345, U352, U367, U369, U376, and U378 are each a non-standard amino acid (selenocysteine). Positions 355-381 (SQQLIPTEASASURUKNQAKKUEUPSN) are disordered.

This sequence belongs to the selenoprotein P family. In terms of processing, phosphorylation sites are present in the extracellular medium. In terms of tissue distribution, made in the liver and heart and secreted into the plasma. It is also found in the kidney.

It is found in the secreted. Its function is as follows. Might be responsible for some of the extracellular antioxidant defense properties of selenium or might be involved in the transport of selenium. May supply selenium to tissues such as brain and testis. In Homo sapiens (Human), this protein is Selenoprotein P.